A 326-amino-acid chain; its full sequence is AA9 family lytic polysaccharide monooxygenase B (326 aa).

Positions 1–19 (MKSFTIAALAALWAQEAAA) are cleaved as a signal peptide. His20 and His98 together coordinate Cu(2+). The cysteines at positions 57 and 192 are disulfide-linked. O2-binding residues include His178 and Gln187. Tyr189 contributes to the Cu(2+) binding site. Over residues 265–281 (PSATLTQPTSTATATSA) the composition is skewed to low complexity. A disordered region spans residues 265 to 286 (PSATLTQPTSTATATSAPGGGG). The CBM1 domain maps to 289–326 (CTAAKYQQCGGTGYTGCTTCASGSTCSAVSPPYYSQCL).

The protein belongs to the polysaccharide monooxygenase AA9 family. Cu(2+) is required as a cofactor.

It localises to the secreted. It catalyses the reaction [(1-&gt;4)-beta-D-glucosyl]n+m + reduced acceptor + O2 = 4-dehydro-beta-D-glucosyl-[(1-&gt;4)-beta-D-glucosyl]n-1 + [(1-&gt;4)-beta-D-glucosyl]m + acceptor + H2O.. Lytic polysaccharide monooxygenase (LPMO) that depolymerizes crystalline and amorphous polysaccharides via the oxidation of scissile alpha- or beta-(1-4)-glycosidic bonds, yielding C1 and C4 oxidation products. Catalysis by LPMOs requires the reduction of the active-site copper from Cu(II) to Cu(I) by a reducing agent and H(2)O(2) or O(2) as a cosubstrate. Shows no activity on wheat arabinoxylan, konjac glucomannan, acetylated spruce galactoglucomannan, or cellopentaose. The protein is AA9 family lytic polysaccharide monooxygenase B of Thermothielavioides terrestris (strain ATCC 38088 / NRRL 8126) (Thielavia terrestris).